Here is a 242-residue protein sequence, read N- to C-terminus: Ethanolamine ammonia-lyase small subunit (242 aa).

2 residues coordinate adenosylcob(III)alamin: V155 and E176.

It belongs to the EutC family. The basic unit is a heterodimer which dimerizes to form tetramers. The heterotetramers trimerize; 6 large subunits form a core ring with 6 small subunits projecting outwards. Adenosylcob(III)alamin is required as a cofactor.

The protein resides in the bacterial microcompartment. The catalysed reaction is ethanolamine = acetaldehyde + NH4(+). The protein operates within amine and polyamine degradation; ethanolamine degradation. In terms of biological role, catalyzes the deamination of various vicinal amino-alcohols to oxo compounds. Allows this organism to utilize ethanolamine as the sole source of nitrogen and carbon in the presence of external vitamin B12. The polypeptide is Ethanolamine ammonia-lyase small subunit (Clostridium acetobutylicum (strain ATCC 824 / DSM 792 / JCM 1419 / IAM 19013 / LMG 5710 / NBRC 13948 / NRRL B-527 / VKM B-1787 / 2291 / W)).